Reading from the N-terminus, the 353-residue chain is UPF0283 membrane protein YcjF (353 aa).

Residues 1 to 19 (MSEPLKPRIDFAEPLKEEP) show a composition bias toward basic and acidic residues. The tract at residues 1–35 (MSEPLKPRIDFAEPLKEEPTSAFKAQQTFSEAESR) is disordered. The next 3 membrane-spanning stretches (helical) occupy residues 70–90 (MVMG…VQWT), 100–120 (VALG…GSVV), and 213–233 (ESTL…FIAW).

It belongs to the UPF0283 family.

It is found in the cell inner membrane. In Salmonella newport (strain SL254), this protein is UPF0283 membrane protein YcjF.